Here is an 812-residue protein sequence, read N- to C-terminus: Mitochondrial intermediate peptidase (812 aa).

The transit peptide at 1-29 directs the protein to the mitochondrion; it reads MRLSRQLLRSTPFLTRAKPVSGKVSHFRS. A disordered region spans residues 19-49; the sequence is PVSGKVSHFRSRTDLKGGSSNSSKSPDSVGD. The span at 37-46 shows a compositional bias: low complexity; that stretch reads SSNSSKSPDS. Histidine 595 lines the Zn(2+) pocket. The active site involves glutamate 596. Residues histidine 599 and histidine 602 each coordinate Zn(2+).

It belongs to the peptidase M3 family. The cofactor is Zn(2+).

It is found in the mitochondrion matrix. The enzyme catalyses Release of an N-terminal octapeptide as second stage of processing of some proteins imported into the mitochondrion.. Cleaves proteins, imported into the mitochondrion, to their mature size. While most mitochondrial precursor proteins are processed to the mature form in one step by mitochondrial processing peptidase (MPP), the sequential cleavage by MIP of an octapeptide after initial processing by MPP is a required step for a subgroup of nuclear-encoded precursor proteins destined for the matrix or the inner membrane. In Scheffersomyces stipitis (strain ATCC 58785 / CBS 6054 / NBRC 10063 / NRRL Y-11545) (Yeast), this protein is Mitochondrial intermediate peptidase (OCT1).